The chain runs to 408 residues: Putative transporter AmpG 2 (408 aa).

12 helical membrane-spanning segments follow: residues 10–30, 49–69, 84–104, 109–129, 154–174, 177–197, 224–244, 261–281, 294–311, 315–337, 353–373, and 378–398; these read YISNIFFILIISFPGGLIYLL, IGLFSLVNFIHIFKFLWGPLL, YCLIIALVSCICCVYILTNFN, FIPFALCLVAVAFFSSIYDML, FRIGILIAGSGALYLSTIISW, VYRSMAILCIPSLLLIIIYPL, WLIIVSFMLLYRLQDNFLSIM, LGYKAFGMCAAILGGFIGGFL, ALIYHALSSLSFLFLYFY, ITSLYIAVFFQEFTKGLTMSPFF, IALITSIAYISTILFGSISGY, and LGWTYFFLVAGFCFIPAYILI.

Belongs to the major facilitator superfamily.

It localises to the cell inner membrane. The sequence is that of Putative transporter AmpG 2 (ampG2) from Rickettsia felis (strain ATCC VR-1525 / URRWXCal2) (Rickettsia azadi).